The chain runs to 338 residues: MQLVDRVRGAVTGMSRRLVVGAVGAALVSGLVGAVGGTATAGAFSRPGLPVEYLQVPSPSMGRDIKVQFQSGGANSPALYLLDGLRAQDDFSGWDINTPAFEWYDQSGLSVVMPVGGQSSFYSDWYQPACGKAGCQTYKWETFLTSELPGWLQANRHVKPTGSAVVGLSMAASSALTLAIYHPQQFVYAGAMSGLLDPSQAMGPTLIGLAMGDAGGYKASDMWGPKEDPAWQRNDPLLNVGKLIANNTRVWVYCGNGKPSDLGGNNLPAKFLEGFVRTSNIKFQDAYNAGGGHNGVFDFPDSGTHSWEYWGAQLNAMKPDLQRALGATPNTGPAPQGA.

An N-terminal signal peptide occupies residues 1–42 (MQLVDRVRGAVTGMSRRLVVGAVGAALVSGLVGAVGGTATAG). Residue 85–86 (LR) participates in substrate binding. The fibronectin-binding stretch occupies residues 101 to 111 (FEWYDQSGLSV). C130 and C135 form a disulfide bridge. S169 and D197 together coordinate substrate. The active-site Nucleophile is S169. Residue E273 is part of the active site. Substrate contacts are provided by residues 275 to 278 (FVRT), K282, and 305 to 307 (HSW). Residue H305 is part of the active site.

Belongs to the mycobacterial A85 antigen family. As to quaternary structure, homodimer.

It is found in the secreted. The protein localises to the cell wall. The protein resides in the cytoplasm. The enzyme catalyses an acyl-CoA + a 1,2-diacyl-sn-glycerol = a triacyl-sn-glycerol + CoA. It catalyses the reaction 2 alpha,alpha'-trehalose 6-mycolate = alpha,alpha'-trehalose 6,6'-bismycolate + alpha,alpha-trehalose. Functionally, the antigen 85 proteins (FbpA, FbpB, FbpC) are responsible for the high affinity of mycobacteria for fibronectin, a large adhesive glycoprotein, which facilitates the attachment of M.tuberculosis to murine alveolar macrophages (AMs). They also help to maintain the integrity of the cell wall by catalyzing the transfer of mycolic acids to cell wall arabinogalactan, and through the synthesis of alpha,alpha-trehalose dimycolate (TDM, cord factor). They catalyze the transfer of a mycoloyl residue from one molecule of alpha,alpha-trehalose monomycolate (TMM) to another TMM, leading to the formation of TDM. FbpA mediates triacylglycerol (TAG) formation with long-chain acyl-CoA as the acyl donor and 1,2-dipalmitoyl-sn-glycerol (1,2-dipalmitin) as the acyl acceptor. It has a preference for C26:0-CoA over C18:1-CoA. In Mycobacterium bovis (strain ATCC BAA-935 / AF2122/97), this protein is Diacylglycerol acyltransferase/mycolyltransferase Ag85A (fbpA).